The chain runs to 212 residues: Methylthioribulose-1-phosphate dehydratase (212 aa).

Zn(2+) contacts are provided by histidine 97 and histidine 99.

This sequence belongs to the aldolase class II family. MtnB subfamily. In terms of assembly, homotetramer. It depends on Zn(2+) as a cofactor.

It carries out the reaction 5-(methylsulfanyl)-D-ribulose 1-phosphate = 5-methylsulfanyl-2,3-dioxopentyl phosphate + H2O. The protein operates within amino-acid biosynthesis; L-methionine biosynthesis via salvage pathway; L-methionine from S-methyl-5-thio-alpha-D-ribose 1-phosphate: step 2/6. Its function is as follows. Catalyzes the dehydration of methylthioribulose-1-phosphate (MTRu-1-P) into 2,3-diketo-5-methylthiopentyl-1-phosphate (DK-MTP-1-P). In Bacillus cereus (strain B4264), this protein is Methylthioribulose-1-phosphate dehydratase.